Here is a 206-residue protein sequence, read N- to C-terminus: Heterochromatin protein 1 (206 aa).

Disordered stretches follow at residues 1–24 (MGKKIDNPESSAKVSDAEEEEEEY) and 47–145 (GYPE…GFDR). 2 positions are modified to phosphoserine: Ser-11 and Ser-15. The Chromo 1 domain maps to 24 to 82 (YAVEKIIDRRVRKGKVEYYLKWKGYPETENTWEPENNLDCQDLIQQYEASRKDEEKSAA). Low complexity predominate over residues 50–60 (ETENTWEPENN). The span at 72–98 (ASRKDEEKSAASKKDRPSSSAKAKETQ) shows a compositional bias: basic and acidic residues. Positions 95-206 (KETQGRASSS…RLSWYSDNED (112 aa)) are binds to Su(var)39. 3 positions are modified to phosphoserine: Ser-102, Ser-103, and Ser-113. Phosphothreonine is present on residues Thr-127, Thr-128, and Thr-134. Residues 147-205 (LEAEKILGASDNNGRLTFLIQFKGVDQAEMVPSSVANEKIPRMVIHFYEERLSWYSDNE) enclose the Chromo 2 domain.

As to quaternary structure, homodimer. Probably associates with Su(var)3-9. Interacts with Mcm10. Interacts (via chromoshadow domain) with piwi (via N-terminal region). Interacts with Rrp6. Associates with and may be part of the HipHop-HOAP telomere capping complex but is not required for its stability or telomere localization. Interacts (via the chromo domain 2 (chromoshadow domain) and the hinge region between chromo domains 1 and 2) with cav/HOAP (via C-terminus); the interaction is direct. Each molecule of cav/HOAP interacts with 2 molecules of Su(var)205/HP1. Interacts with HipHop (via N-terminus). Interacts with moi/modigliani; the interaction is direct. Interacts (via chromo domain 1) with His3/histone 3 (via N-terminal tail methylated at 'Lys-10'); the interaction is direct. In terms of tissue distribution, salivary gland (at protein level).

It is found in the nucleus. Its subcellular location is the nucleoplasm. It localises to the chromosome. The protein resides in the telomere. Structural component of heterochromatin, involved in gene repression and the modification of position-effect-variegation. Recognizes and binds histone H3 tails methylated at 'Lys-9', leading to epigenetic repression. Stabilizes chromatin-associated RNAs probably by binding to them and thereby preventing their degradation. Associates with, and may be a part of, the HipHop-HOAP complex that recruits the MTV complex to form the terminin telomere-capping complex, which binds to chromosome ends in a sequence-independent manner and prevents telomere fusion. Telomere capping is independent of the origin recognition complex (ORC). This Drosophila melanogaster (Fruit fly) protein is Heterochromatin protein 1.